Reading from the N-terminus, the 168-residue chain is Photosystem I assembly protein Ycf3 (168 aa).

TPR repeat units lie at residues 35–68 (AFTY…EIDP), 72–105 (SYIL…NPFL), and 120–153 (GEQA…TPGN).

It belongs to the Ycf3 family.

Its subcellular location is the plastid. It localises to the chloroplast thylakoid membrane. Essential for the assembly of the photosystem I (PSI) complex. May act as a chaperone-like factor to guide the assembly of the PSI subunits. This is Photosystem I assembly protein Ycf3 from Coffea arabica (Arabian coffee).